A 518-amino-acid polypeptide reads, in one-letter code: Glucose-6-phosphate 1-dehydrogenase (518 aa).

NADP(+)-binding positions include 36–43, R70, and K169; that span reads GASGDLAK. D-glucose 6-phosphate-binding positions include K169, 199–203, E237, and D256; that span reads HYLGK. The Proton acceptor role is filled by H261. Residue R356 participates in NADP(+) binding. K359 and R364 together coordinate D-glucose 6-phosphate. Residues K365, R369, and R392 each contribute to the NADP(+) site. Q394 serves as a coordination point for D-glucose 6-phosphate. Residues 400 to 402, 420 to 422, R486, Y502, and W508 contribute to the NADP(+) site; these read YFK and DLT.

Belongs to the glucose-6-phosphate dehydrogenase family.

It localises to the cytoplasm. Its subcellular location is the cytosol. The enzyme catalyses D-glucose 6-phosphate + NADP(+) = 6-phospho-D-glucono-1,5-lactone + NADPH + H(+). It functions in the pathway carbohydrate degradation; pentose phosphate pathway; D-ribulose 5-phosphate from D-glucose 6-phosphate (oxidative stage): step 1/3. Functionally, cytosolic glucose-6-phosphate dehydrogenase that catalyzes the first and rate-limiting step of the oxidative branch within the pentose phosphate pathway/shunt, an alternative route to glycolysis for the dissimilation of carbohydrates and a major source of reducing power and metabolic intermediates for fatty acid and nucleic acid biosynthetic processes. The sequence is that of Glucose-6-phosphate 1-dehydrogenase (Zw) from Drosophila yakuba (Fruit fly).